Here is a 230-residue protein sequence, read N- to C-terminus: 7-cyano-7-deazaguanine synthase (230 aa).

16–26 (LSGGLDSATVV) contacts ATP. Positions 195, 205, 208, and 211 each coordinate Zn(2+).

It belongs to the QueC family. The cofactor is Zn(2+).

It catalyses the reaction 7-carboxy-7-deazaguanine + NH4(+) + ATP = 7-cyano-7-deazaguanine + ADP + phosphate + H2O + H(+). The protein operates within purine metabolism; 7-cyano-7-deazaguanine biosynthesis. In terms of biological role, catalyzes the ATP-dependent conversion of 7-carboxy-7-deazaguanine (CDG) to 7-cyano-7-deazaguanine (preQ(0)). This Pseudomonas fluorescens (strain Pf0-1) protein is 7-cyano-7-deazaguanine synthase.